Here is a 156-residue protein sequence, read N- to C-terminus: Small ribosomal subunit protein uS7 (156 aa).

Belongs to the universal ribosomal protein uS7 family. In terms of assembly, part of the 30S ribosomal subunit. Contacts proteins S9 and S11.

In terms of biological role, one of the primary rRNA binding proteins, it binds directly to 16S rRNA where it nucleates assembly of the head domain of the 30S subunit. Is located at the subunit interface close to the decoding center, probably blocks exit of the E-site tRNA. The sequence is that of Small ribosomal subunit protein uS7 from Tropheryma whipplei (strain TW08/27) (Whipple's bacillus).